An 84-amino-acid polypeptide reads, in one-letter code: Large ribosomal subunit protein bL27 (84 aa).

The disordered stretch occupies residues 1–21; it reads MAHKKGGGSTKNGRDSNPKYL.

Belongs to the bacterial ribosomal protein bL27 family.

The protein is Large ribosomal subunit protein bL27 of Chlorobium limicola (strain DSM 245 / NBRC 103803 / 6330).